Reading from the N-terminus, the 123-residue chain is Small ribosomal subunit protein uS12 (123 aa).

The interval 1 to 26 (MPTLNQLVRKPRKRPVAKSKVPALDA) is disordered. Residue D89 is modified to 3-methylthioaspartic acid. The interval 104 to 123 (TAGVKNRKQSRSKYGAKRPK) is disordered. A compositionally biased stretch (basic residues) spans 108–123 (KNRKQSRSKYGAKRPK).

The protein belongs to the universal ribosomal protein uS12 family. In terms of assembly, part of the 30S ribosomal subunit. Contacts proteins S8 and S17. May interact with IF1 in the 30S initiation complex.

In terms of biological role, with S4 and S5 plays an important role in translational accuracy. Functionally, interacts with and stabilizes bases of the 16S rRNA that are involved in tRNA selection in the A site and with the mRNA backbone. Located at the interface of the 30S and 50S subunits, it traverses the body of the 30S subunit contacting proteins on the other side and probably holding the rRNA structure together. The combined cluster of proteins S8, S12 and S17 appears to hold together the shoulder and platform of the 30S subunit. The protein is Small ribosomal subunit protein uS12 of Acidithiobacillus ferrooxidans (strain ATCC 23270 / DSM 14882 / CIP 104768 / NCIMB 8455) (Ferrobacillus ferrooxidans (strain ATCC 23270)).